The primary structure comprises 230 residues: Ribonuclease 3 (230 aa).

The 130-residue stretch at 6–135 (VSELRARYGI…FNGALFLDQG (130 aa)) folds into the RNase III domain. A Mg(2+)-binding site is contributed by Glu-48. Asp-52 is a catalytic residue. 2 residues coordinate Mg(2+): Asp-121 and Glu-124. Residue Glu-124 is part of the active site. In terms of domain architecture, DRBM spans 161–230 (DYKTNLQEFL…AKKALEQLKA (70 aa)).

Belongs to the ribonuclease III family. Homodimer. Mg(2+) is required as a cofactor.

The protein resides in the cytoplasm. The enzyme catalyses Endonucleolytic cleavage to 5'-phosphomonoester.. Digests double-stranded RNA. Involved in the processing of primary rRNA transcript to yield the immediate precursors to the large and small rRNAs (23S and 16S). Processes some mRNAs, and tRNAs when they are encoded in the rRNA operon. Processes pre-crRNA and tracrRNA of type II CRISPR loci if present in the organism. This is Ribonuclease 3 from Latilactobacillus sakei subsp. sakei (strain 23K) (Lactobacillus sakei subsp. sakei).